The primary structure comprises 305 residues: Protoheme IX farnesyltransferase (305 aa).

The next 9 membrane-spanning stretches (helical) occupy residues 31–51 (VMSLVIFTGFVGMWLAPYSVH), 52–72 (PFIAGIAVVCIALGAGSAGAI), 96–118 (VIESDEALSFGLITGFFAVFFMA), 122–144 (NLLASFLLLFTIFYYICIYTIWL), 151–171 (NIVIGGVSGALPPVIGYAAVS), 180–200 (ILFLIIFIWTPPHSWALALFC), 225–245 (ILIYSILLFIVSLMPFFIGMN), 247–267 (FIYLIISGILGVVFLYYAGSL), and 281–301 (FAYSIFYLFFIFLLLYSTNTI).

Belongs to the UbiA prenyltransferase family. Protoheme IX farnesyltransferase subfamily.

It localises to the cell inner membrane. The enzyme catalyses heme b + (2E,6E)-farnesyl diphosphate + H2O = Fe(II)-heme o + diphosphate. It functions in the pathway porphyrin-containing compound metabolism; heme O biosynthesis; heme O from protoheme: step 1/1. Converts heme B (protoheme IX) to heme O by substitution of the vinyl group on carbon 2 of heme B porphyrin ring with a hydroxyethyl farnesyl side group. This is Protoheme IX farnesyltransferase from Rickettsia peacockii (strain Rustic).